The primary structure comprises 508 residues: Photosystem II CP47 reaction center protein (508 aa).

Helical transmembrane passes span 21–36, 101–115, 140–156, 203–218, 237–252, and 457–472; these read SVHI…WAGS, IVFS…IWHW, GIHL…FGAF, IAAG…FHLS, VLSS…AFVV, and TFAL…HGAR.

The protein belongs to the PsbB/PsbC family. PsbB subfamily. PSII is composed of 1 copy each of membrane proteins PsbA, PsbB, PsbC, PsbD, PsbE, PsbF, PsbH, PsbI, PsbJ, PsbK, PsbL, PsbM, PsbT, PsbX, PsbY, PsbZ, Psb30/Ycf12, at least 3 peripheral proteins of the oxygen-evolving complex and a large number of cofactors. It forms dimeric complexes. The cofactor is Binds multiple chlorophylls. PSII binds additional chlorophylls, carotenoids and specific lipids..

The protein resides in the plastid. Its subcellular location is the chloroplast thylakoid membrane. One of the components of the core complex of photosystem II (PSII). It binds chlorophyll and helps catalyze the primary light-induced photochemical processes of PSII. PSII is a light-driven water:plastoquinone oxidoreductase, using light energy to abstract electrons from H(2)O, generating O(2) and a proton gradient subsequently used for ATP formation. The protein is Photosystem II CP47 reaction center protein of Zea mays (Maize).